The sequence spans 144 residues: Large ribosomal subunit protein uL16 (144 aa).

Residues 1–17 (MLQPKKTKFRRQQKGRA) are compositionally biased toward basic residues. The tract at residues 1-22 (MLQPKKTKFRRQQKGRAKGNAQ) is disordered.

Belongs to the universal ribosomal protein uL16 family. As to quaternary structure, part of the 50S ribosomal subunit.

Binds 23S rRNA and is also seen to make contacts with the A and possibly P site tRNAs. In Bacteroides thetaiotaomicron (strain ATCC 29148 / DSM 2079 / JCM 5827 / CCUG 10774 / NCTC 10582 / VPI-5482 / E50), this protein is Large ribosomal subunit protein uL16.